The sequence spans 368 residues: Large ribosomal subunit protein mL46 (368 aa).

The segment at 53–81 (TATATTTTTLPPPHPPVTTSTGTHAATST) is disordered. Positions 69–81 (VTTSTGTHAATST) are enriched in low complexity.

It belongs to the mitochondrion-specific ribosomal protein mL46 family. As to quaternary structure, component of the mitochondrial large ribosomal subunit (mt-LSU). Mature N.crassa 74S mitochondrial ribosomes consist of a small (37S) and a large (54S) subunit. The 37S small subunit contains a 16S ribosomal RNA (16S mt-rRNA) and 32 different proteins. The 54S large subunit contains a 23S rRNA (23S mt-rRNA) and 42 different proteins.

The protein localises to the mitochondrion. Its function is as follows. Component of the mitochondrial ribosome (mitoribosome), a dedicated translation machinery responsible for the synthesis of mitochondrial genome-encoded proteins, including at least some of the essential transmembrane subunits of the mitochondrial respiratory chain. The mitoribosomes are attached to the mitochondrial inner membrane and translation products are cotranslationally integrated into the membrane. This chain is Large ribosomal subunit protein mL46 (mrpl17), found in Neurospora crassa (strain ATCC 24698 / 74-OR23-1A / CBS 708.71 / DSM 1257 / FGSC 987).